The chain runs to 80 residues: Exodeoxyribonuclease 7 small subunit (80 aa).

It belongs to the XseB family. As to quaternary structure, heterooligomer composed of large and small subunits.

It is found in the cytoplasm. It catalyses the reaction Exonucleolytic cleavage in either 5'- to 3'- or 3'- to 5'-direction to yield nucleoside 5'-phosphates.. Its function is as follows. Bidirectionally degrades single-stranded DNA into large acid-insoluble oligonucleotides, which are then degraded further into small acid-soluble oligonucleotides. The protein is Exodeoxyribonuclease 7 small subunit of Aliivibrio salmonicida (strain LFI1238) (Vibrio salmonicida (strain LFI1238)).